The primary structure comprises 662 residues: UvrABC system protein B (662 aa).

In terms of domain architecture, Helicase ATP-binding spans 25-414 (TGLNSKKRSQ…GTVVELIIRP (390 aa)). 38–45 (GITGSGKT) provides a ligand contact to ATP. The Beta-hairpin signature appears at 91 to 114 (YYDYYQPESYIVRTDTFIEKDSSI). The region spanning 430-592 (QVEDLISEIQ…IIPKTINRAI (163 aa)) is the Helicase C-terminal domain. A UVR domain is found at 622 to 657 (KAHMDKLKKEMFKAASNLEFEQAAKLRNQLKALEEA).

Belongs to the UvrB family. In terms of assembly, forms a heterotetramer with UvrA during the search for lesions. Interacts with UvrC in an incision complex.

The protein localises to the cytoplasm. The UvrABC repair system catalyzes the recognition and processing of DNA lesions. A damage recognition complex composed of 2 UvrA and 2 UvrB subunits scans DNA for abnormalities. Upon binding of the UvrA(2)B(2) complex to a putative damaged site, the DNA wraps around one UvrB monomer. DNA wrap is dependent on ATP binding by UvrB and probably causes local melting of the DNA helix, facilitating insertion of UvrB beta-hairpin between the DNA strands. Then UvrB probes one DNA strand for the presence of a lesion. If a lesion is found the UvrA subunits dissociate and the UvrB-DNA preincision complex is formed. This complex is subsequently bound by UvrC and the second UvrB is released. If no lesion is found, the DNA wraps around the other UvrB subunit that will check the other stand for damage. The protein is UvrABC system protein B of Rickettsia prowazekii (strain Madrid E).